The chain runs to 445 residues: Probable histidine--tRNA ligase, cytoplasmic (445 aa).

It belongs to the class-II aminoacyl-tRNA synthetase family.

It is found in the cytoplasm. It catalyses the reaction tRNA(His) + L-histidine + ATP = L-histidyl-tRNA(His) + AMP + diphosphate + H(+). This Antonospora locustae (Microsporidian parasite) protein is Probable histidine--tRNA ligase, cytoplasmic.